We begin with the raw amino-acid sequence, 475 residues long: MSAFQNGGIASRALDDDSDIEEEALANDYKEQVQYEGMEELEQVNSMSMAQQTDDIQSRLAAAAQPLDFSAPLEVKFASYDNYCSLFHFILNSDGPVDLEPPSYYWAWDVIDEFIYQFNSFCSYRNRVARQGTNEEEIQILREAPNTWGCYSVLNVLYSLIQRSQINEQLAAMRRNEEPMAVAGDYGSKSLYRMLGYFSIIGLLRVHCLLGDFSLALKTLDDIELNKKAMFARVMAAHFTTYYYVGFSYMMMRRYADAIRMFSHILIYVSRTKNFQKNAQYDSISKKNDQMYALIAICVAFHPTRLDDTIHTALREKYGDQLLKLQRGGPESLPIFEELFRSACPKFISPTPPDFDNPELNVDPLEHHLSIFMDEVKTNMWSPTVKSYLRLYTTMDLKKLAGFLEVEPEKLRGWLLVNKQRSRQIRWTDNGLLDGEVVNSNDLDYAMQGDLIHISEAKVGRKLVDWYLRNLARTY.

In terms of domain architecture, PCI spans 257–451 (DAIRMFSHIL…DLDYAMQGDL (195 aa)).

The protein belongs to the eIF-3 subunit L family. As to quaternary structure, component of the eukaryotic translation initiation factor 3 (eIF-3) complex.

The protein localises to the cytoplasm. Component of the eukaryotic translation initiation factor 3 (eIF-3) complex, which is involved in protein synthesis of a specialized repertoire of mRNAs and, together with other initiation factors, stimulates binding of mRNA and methionyl-tRNAi to the 40S ribosome. The eIF-3 complex specifically targets and initiates translation of a subset of mRNAs involved in cell proliferation. The chain is Eukaryotic translation initiation factor 3 subunit L from Sclerotinia sclerotiorum (strain ATCC 18683 / 1980 / Ss-1) (White mold).